We begin with the raw amino-acid sequence, 451 residues long: Tubulin alpha-1 chain (451 aa).

Gln11 contacts GTP. Residue Lys40 is modified to N6-acetyllysine. GTP contacts are provided by Glu71, Gly144, Thr145, Thr179, Asn206, and Asn228. A Mg(2+)-binding site is contributed by Glu71. The active site involves Glu254. The disordered stretch occupies residues 432 to 451; the sequence is YEEVGADSAEGDEEDEGDEY.

This sequence belongs to the tubulin family. Dimer of alpha and beta chains. A typical microtubule is a hollow water-filled tube with an outer diameter of 25 nm and an inner diameter of 15 nM. Alpha-beta heterodimers associate head-to-tail to form protofilaments running lengthwise along the microtubule wall with the beta-tubulin subunit facing the microtubule plus end conferring a structural polarity. Microtubules usually have 13 protofilaments but different protofilament numbers can be found in some organisms and specialized cells. Mg(2+) is required as a cofactor. Undergoes a tyrosination/detyrosination cycle, the cyclic removal and re-addition of a C-terminal tyrosine residue by the enzymes tubulin tyrosine carboxypeptidase (TTCP) and tubulin tyrosine ligase (TTL), respectively. In terms of processing, acetylation of alpha chains at Lys-40 stabilizes microtubules and affects affinity and processivity of microtubule motors. This modification has a role in multiple cellular functions, ranging from cell motility, cell cycle progression or cell differentiation to intracellular trafficking and signaling.

Its subcellular location is the cytoplasm. The protein resides in the cytoskeleton. The catalysed reaction is GTP + H2O = GDP + phosphate + H(+). Its function is as follows. Tubulin is the major constituent of microtubules, a cylinder consisting of laterally associated linear protofilaments composed of alpha- and beta-tubulin heterodimers. Microtubules grow by the addition of GTP-tubulin dimers to the microtubule end, where a stabilizing cap forms. Below the cap, tubulin dimers are in GDP-bound state, owing to GTPase activity of alpha-tubulin. This is Tubulin alpha-1 chain from Gossypium hirsutum (Upland cotton).